The primary structure comprises 132 residues: Protein LEKR1 (132 aa).

A coiled-coil region spans residues 37 to 116 (FKAMEEKVKA…KKQLSHLQDE (80 aa)).

The sequence is that of Protein LEKR1 (LEKR1) from Homo sapiens (Human).